The following is a 683-amino-acid chain: Protein zntD (683 aa).

The next 3 helical transmembrane spans lie at 12–32 (IISTTVLFILSLLAGIAPYWM), 42–62 (LSWSNTFAGGVFFGAGMLHLF), and 79–99 (PFAALCLCVGFLITLFLELII). Residues 120–129 (VHLSHGHSHH) are compositionally biased toward basic residues. Disordered stretches follow at residues 120-180 (VHLS…TTTT), 299-325 (GFSNNNNNNNNNNNNNNKNNNNNNNNN), 364-390 (CSNDNSNSNNNNSSNNNSSSANITPNT), and 451-489 (IGNSGNIGSNNNNNNNGGGGGGGGNSNIDYNDNEENNNN). Over residues 137–149 (GNPGSGVGIGMGS) the composition is skewed to gly residues. Composition is skewed to low complexity over residues 160-180 (TTSPTITPTTPSEGTTTTTTT) and 302-325 (NNNNNNNNNNNNNNKNNNNNNNNN). A compositionally biased stretch (low complexity) spans 451-465 (IGNSGNIGSNNNNNN). The segment covering 466-475 (NGGGGGGGGN) has biased composition (gly residues). Residues 476-489 (SNIDYNDNEENNNN) are compositionally biased toward low complexity. The next 5 helical transmembrane spans lie at 534–554 (ILLPFILVIALSIHSLFEGLA), 564–584 (VFDILIAIFAHKILASFALGI), 600–620 (FLLVFVFSLTSPIGSILGMVI), 631–651 (PPILQGIASGTFLYVAVVEII), and 662–682 (ILIKSFLLLLGFSGMAVVAIW).

The protein belongs to the ZIP transporter (TC 2.A.5) family.

It is found in the membrane. In terms of biological role, may transport divalent cations. May participate, with dstA, in the regulation of the differentiation of stalk cells during development. This Dictyostelium discoideum (Social amoeba) protein is Protein zntD (zntD).